A 174-amino-acid chain; its full sequence is Large ribosomal subunit protein uL16 (174 aa).

The protein belongs to the universal ribosomal protein uL16 family.

The sequence is that of Large ribosomal subunit protein uL16 from Archaeoglobus fulgidus (strain ATCC 49558 / DSM 4304 / JCM 9628 / NBRC 100126 / VC-16).